Consider the following 721-residue polypeptide: Putative cullin-like protein 1 (721 aa).

One can recognise a Cullin neddylation domain in the interval aspartate 651–asparagine 713.

The protein belongs to the cullin family.

This is Putative cullin-like protein 1 from Arabidopsis thaliana (Mouse-ear cress).